Consider the following 948-residue polypeptide: Valine--tRNA ligase (948 aa).

The 'HIGH' region motif lies at 40-50 (PNVTGSLHMGH). Positions 551 to 555 (KMSKS) match the 'KMSKS' region motif. ATP is bound at residue lysine 554. Positions 879 to 945 (LIDKGAELAR…GKLAEQHARI (67 aa)) form a coiled coil.

The protein belongs to the class-I aminoacyl-tRNA synthetase family. ValS type 1 subfamily. As to quaternary structure, monomer.

It localises to the cytoplasm. It carries out the reaction tRNA(Val) + L-valine + ATP = L-valyl-tRNA(Val) + AMP + diphosphate. Catalyzes the attachment of valine to tRNA(Val). As ValRS can inadvertently accommodate and process structurally similar amino acids such as threonine, to avoid such errors, it has a 'posttransfer' editing activity that hydrolyzes mischarged Thr-tRNA(Val) in a tRNA-dependent manner. The protein is Valine--tRNA ligase of Pseudomonas savastanoi pv. phaseolicola (strain 1448A / Race 6) (Pseudomonas syringae pv. phaseolicola (strain 1448A / Race 6)).